A 495-amino-acid polypeptide reads, in one-letter code: Bifunctional protein GlmU (495 aa).

The tract at residues 1–241 is pyrophosphorylase; that stretch reads MTFPGDTAVL…SALVAGVNNR (241 aa). Residues 12–15, K26, Q83, 88–89, 112–114, G151, E166, N181, and N239 each bind UDP-N-acetyl-alpha-D-glucosamine; these read LAAG, GT, and SGD. Mg(2+) is bound at residue D114. N239 lines the Mg(2+) pocket. Residues 242–262 form a linker region; sequence VQLAQLASELNRRVVAAHQLA. The N-acetyltransferase stretch occupies residues 263–495; sequence GVTVVDPATT…TQPPDADQTP (233 aa). R344 and K362 together coordinate UDP-N-acetyl-alpha-D-glucosamine. Residue H374 is the Proton acceptor of the active site. Positions 377 and 388 each coordinate UDP-N-acetyl-alpha-D-glucosamine. Residues A391, 397 to 398, S416, and A434 each bind acetyl-CoA; that span reads NY. The tract at residues 457-495 is disordered; it reads IENWVQRKRPGSPAAQASKRASEMACQQPTQPPDADQTP. Positions 483-495 are enriched in low complexity; it reads QQPTQPPDADQTP.

This sequence in the N-terminal section; belongs to the N-acetylglucosamine-1-phosphate uridyltransferase family. It in the C-terminal section; belongs to the transferase hexapeptide repeat family. As to quaternary structure, homotrimer. The cofactor is Mg(2+).

It is found in the cytoplasm. The catalysed reaction is alpha-D-glucosamine 1-phosphate + acetyl-CoA = N-acetyl-alpha-D-glucosamine 1-phosphate + CoA + H(+). It catalyses the reaction N-acetyl-alpha-D-glucosamine 1-phosphate + UTP + H(+) = UDP-N-acetyl-alpha-D-glucosamine + diphosphate. It participates in nucleotide-sugar biosynthesis; UDP-N-acetyl-alpha-D-glucosamine biosynthesis; N-acetyl-alpha-D-glucosamine 1-phosphate from alpha-D-glucosamine 6-phosphate (route II): step 2/2. The protein operates within nucleotide-sugar biosynthesis; UDP-N-acetyl-alpha-D-glucosamine biosynthesis; UDP-N-acetyl-alpha-D-glucosamine from N-acetyl-alpha-D-glucosamine 1-phosphate: step 1/1. Its pathway is bacterial outer membrane biogenesis; LPS lipid A biosynthesis. Catalyzes the last two sequential reactions in the de novo biosynthetic pathway for UDP-N-acetylglucosamine (UDP-GlcNAc). The C-terminal domain catalyzes the transfer of acetyl group from acetyl coenzyme A to glucosamine-1-phosphate (GlcN-1-P) to produce N-acetylglucosamine-1-phosphate (GlcNAc-1-P), which is converted into UDP-GlcNAc by the transfer of uridine 5-monophosphate (from uridine 5-triphosphate), a reaction catalyzed by the N-terminal domain. This Mycobacterium bovis (strain ATCC BAA-935 / AF2122/97) protein is Bifunctional protein GlmU.